The primary structure comprises 571 residues: Mannan endo-1,4-beta-mannosidase B (571 aa).

The N-terminal stretch at 1-19 (MNSLSLLLFCIFFVFSTFA) is a signal peptide. The CBM6 domain occupies 22-141 (VYYEAENGKL…WMWVDAFVIN (120 aa)). The 295-residue stretch at 165-459 (PAAKKLYDFL…FTHKTVMNMD (295 aa)) folds into the GH26 domain. Trp-286 contributes to the substrate binding site. Glu-319 functions as the Proton donor in the catalytic mechanism. The substrate site is built by Trp-324 and Tyr-379. Glu-407 functions as the Nucleophile in the catalytic mechanism. CBM10 domains are found at residues 491 to 527 (ECFS…CGIG) and 534 to 571 (VCWS…CGII).

The protein belongs to the glycosyl hydrolase 26 family.

The enzyme catalyses Random hydrolysis of (1-&gt;4)-beta-D-mannosidic linkages in mannans, galactomannans and glucomannans.. This chain is Mannan endo-1,4-beta-mannosidase B (MANB), found in Piromyces sp.